The sequence spans 173 residues: Crossover junction endodeoxyribonuclease RuvC (173 aa).

Active-site residues include Asp8, Glu67, and Asp139. Residues Asp8, Glu67, and Asp139 each contribute to the Mg(2+) site.

Belongs to the RuvC family. As to quaternary structure, homodimer which binds Holliday junction (HJ) DNA. The HJ becomes 2-fold symmetrical on binding to RuvC with unstacked arms; it has a different conformation from HJ DNA in complex with RuvA. In the full resolvosome a probable DNA-RuvA(4)-RuvB(12)-RuvC(2) complex forms which resolves the HJ. The cofactor is Mg(2+).

It is found in the cytoplasm. The catalysed reaction is Endonucleolytic cleavage at a junction such as a reciprocal single-stranded crossover between two homologous DNA duplexes (Holliday junction).. The RuvA-RuvB-RuvC complex processes Holliday junction (HJ) DNA during genetic recombination and DNA repair. Endonuclease that resolves HJ intermediates. Cleaves cruciform DNA by making single-stranded nicks across the HJ at symmetrical positions within the homologous arms, yielding a 5'-phosphate and a 3'-hydroxyl group; requires a central core of homology in the junction. The consensus cleavage sequence is 5'-(A/T)TT(C/G)-3'. Cleavage occurs on the 3'-side of the TT dinucleotide at the point of strand exchange. HJ branch migration catalyzed by RuvA-RuvB allows RuvC to scan DNA until it finds its consensus sequence, where it cleaves and resolves the cruciform DNA. The protein is Crossover junction endodeoxyribonuclease RuvC of Shewanella amazonensis (strain ATCC BAA-1098 / SB2B).